The chain runs to 251 residues: Triosephosphate isomerase (251 aa).

9-11 serves as a coordination point for substrate; it reads NWK. Histidine 95 (electrophile) is an active-site residue. Glutamate 167 serves as the catalytic Proton acceptor. Residues glycine 173, serine 212, and 233 to 234 each bind substrate; that span reads GG.

It belongs to the triosephosphate isomerase family. As to quaternary structure, homodimer.

Its subcellular location is the cytoplasm. It catalyses the reaction D-glyceraldehyde 3-phosphate = dihydroxyacetone phosphate. It functions in the pathway carbohydrate biosynthesis; gluconeogenesis. The protein operates within carbohydrate degradation; glycolysis; D-glyceraldehyde 3-phosphate from glycerone phosphate: step 1/1. Its function is as follows. Involved in the gluconeogenesis. Catalyzes stereospecifically the conversion of dihydroxyacetone phosphate (DHAP) to D-glyceraldehyde-3-phosphate (G3P). The polypeptide is Triosephosphate isomerase (Pseudomonas putida (strain ATCC 700007 / DSM 6899 / JCM 31910 / BCRC 17059 / LMG 24140 / F1)).